The chain runs to 413 residues: MFCIIHFGNPKNDKFLGSSTLYSQKLKTNNIKILCLQVFYYNIYESTNNNNNNKNKNKTLLLNNIRTYSTLSKGALSTTTTATTKKMSMDDSFELPTNLNHFLSYVPSLEYHMHKGQCGRIGVFGGSAEYTGAPFFAGITSLRLGADIVHIFAPSEGGTATAIKTLSPELIVHPLDQQMDPSTIIPWLLSIHVLIIGPGLGRSSIAWKSAKEVIKAARNINLPMVLDGDALRLICEDLELVKGYDKVILTPNFVEYRALSDAAKKLNNDNSNNILSPSDLAKALGNVVIVQKGQEDIITDGTISYSCDKAGMPRRCGGQGDVLAGVIGTFYAWTQNALKGKTSEELEHLKESIGENQSAAASAAYAGCVLVRYAAKLAFKNNRRSTITDDIIKSVPNALVWGFLTDDRGRPTI.

The 305-residue stretch at N98–G402 folds into the YjeF C-terminal domain. (6S)-NADPHX is bound by residues G199 and N252–A258. ATP contacts are provided by residues K292–D296 and G311–G320. D321 contacts (6S)-NADPHX.

The protein belongs to the NnrD/CARKD family. Mg(2+) serves as cofactor.

It catalyses the reaction (6S)-NADHX + ATP = ADP + phosphate + NADH + H(+). The enzyme catalyses (6S)-NADPHX + ATP = ADP + phosphate + NADPH + H(+). In terms of biological role, catalyzes the dehydration of the S-form of NAD(P)HX at the expense of ATP, which is converted to ADP. Together with NAD(P)HX epimerase, which catalyzes the epimerization of the S- and R-forms, the enzyme allows the repair of both epimers of NAD(P)HX, a damaged form of NAD(P)H that is a result of enzymatic or heat-dependent hydration. This chain is ATP-dependent (S)-NAD(P)H-hydrate dehydratase, found in Heterostelium pallidum (strain ATCC 26659 / Pp 5 / PN500) (Cellular slime mold).